The sequence spans 449 residues: Glutamyl-tRNA(Gln) amidotransferase subunit A (449 aa).

Residues K51 and S126 each act as charge relay system in the active site. The segment at S103 to G128 is disordered. The segment covering S119–G128 has biased composition (low complexity). S150 acts as the Acyl-ester intermediate in catalysis.

The protein belongs to the amidase family. GatA subfamily. In terms of assembly, heterotrimer of A, B and C subunits.

The catalysed reaction is L-glutamyl-tRNA(Gln) + L-glutamine + ATP + H2O = L-glutaminyl-tRNA(Gln) + L-glutamate + ADP + phosphate + H(+). Its function is as follows. Allows the formation of correctly charged Gln-tRNA(Gln) through the transamidation of misacylated Glu-tRNA(Gln) in organisms which lack glutaminyl-tRNA synthetase. The reaction takes place in the presence of glutamine and ATP through an activated gamma-phospho-Glu-tRNA(Gln). This Wolinella succinogenes (strain ATCC 29543 / DSM 1740 / CCUG 13145 / JCM 31913 / LMG 7466 / NCTC 11488 / FDC 602W) (Vibrio succinogenes) protein is Glutamyl-tRNA(Gln) amidotransferase subunit A.